The sequence spans 271 residues: Phosphate import ATP-binding protein PstB (271 aa).

The 242-residue stretch at 25–266 (FDTKNLNLWY…PSDKRTEDYI (242 aa)) folds into the ABC transporter domain. 57–64 (GPSGCGKS) contacts ATP.

This sequence belongs to the ABC transporter superfamily. Phosphate importer (TC 3.A.1.7) family. As to quaternary structure, the complex is composed of two ATP-binding proteins (PstB), two transmembrane proteins (PstC and PstA) and a solute-binding protein (PstS).

It localises to the cell membrane. It catalyses the reaction phosphate(out) + ATP + H2O = ADP + 2 phosphate(in) + H(+). Its function is as follows. Part of the ABC transporter complex PstSACB involved in phosphate import. Responsible for energy coupling to the transport system. This is Phosphate import ATP-binding protein PstB from Bacillus anthracis.